Reading from the N-terminus, the 205-residue chain is ITG-like peptide (205 aa).

Residues 1–15 form the signal peptide; it reads MRVYAAITLVLVANT. 2 propeptides span residues 16 to 188 and 202 to 205; these read AYIG…TSGE and MPFA.

Expressed throughout the nervous system (at protein level).

The protein resides in the secreted. This Camponotus floridanus (Florida carpenter ant) protein is ITG-like peptide.